The sequence spans 82 residues: Small ribosomal subunit protein uS17 (82 aa).

It belongs to the universal ribosomal protein uS17 family. As to quaternary structure, part of the 30S ribosomal subunit.

In terms of biological role, one of the primary rRNA binding proteins, it binds specifically to the 5'-end of 16S ribosomal RNA. The sequence is that of Small ribosomal subunit protein uS17 from Afipia carboxidovorans (strain ATCC 49405 / DSM 1227 / KCTC 32145 / OM5) (Oligotropha carboxidovorans).